The primary structure comprises 415 residues: UDP-galactose transporter homolog 1 (415 aa).

The interval 1-39 is disordered; that stretch reads MHLVPEGSESMSTQQNGSAQKPVTLNGSASTKGQAPEAP. Over residues 9-33 the composition is skewed to polar residues; the sequence is ESMSTQQNGSAQKPVTLNGSASTKG. Residues N16 and N26 are each glycosylated (N-linked (GlcNAc...) asparagine). Transmembrane regions (helical) follow at residues 45 to 65, 95 to 115, 132 to 152, 161 to 181, and 185 to 205; these read LIQL…WGVL, IVLN…YLYF, ILFP…FGYA, TFIL…LTIF, and YPLY…TFTL. N-linked (GlcNAc...) asparagine glycosylation is present at N221. A helical membrane pass occupies residues 223 to 243; that stretch reads SGSSLYGIFLLSINLLLDGLT. N-linked (GlcNAc...) asparagine glycosylation is present at N244. The next 3 helical transmembrane spans lie at 281-301, 325-345, and 368-388; these read LLVM…PIPI, NVLG…YTLS, and VFWF…LVFG.

Belongs to the nucleotide-sugar transporter family. SLC35B subfamily.

The protein localises to the endoplasmic reticulum membrane. Functionally, may be involved in specific transport of UDP-Gal from the cytosol to the Golgi lumen. Involved in the maintenance of optimal conditions for the folding of secretory pathway proteins in the endoplasmic reticulum. This Aspergillus fumigatus (strain ATCC MYA-4609 / CBS 101355 / FGSC A1100 / Af293) (Neosartorya fumigata) protein is UDP-galactose transporter homolog 1 (hut1).